A 458-amino-acid chain; its full sequence is NADH-quinone oxidoreductase subunit N (458 aa).

The next 14 membrane-spanning stretches (helical) occupy residues 4-24 (LLPEITLTLIALLGQFFAVII), 30-50 (IISNIIILLCILSIFLTFKYS), 62-82 (GINIGISKSIVLLFTIISMII), 94-114 (LKFEFITLILLSVVGIFVAIS), 118-138 (FLLLFCGMELTALTSYALAGF), 153-173 (FILGSLVSCLSLFGISFIYGF), 194-214 (LGLIIGIVLFLSSIFFKLSSV), 235-255 (FTAASKIGMVIVLLNISKLII), 261-281 (INYNLIKIIAILSMLFGAFGA), 290-310 (LMAYSTILNIGYVLIGVLLHN), 318-338 (LLYILIYAVGSIGFFTCLIML), 361-381 (IAAIISIVMFSMIGIPPLTGF), 397-417 (FILAYCGIFTSVVAAFYYLKV), and 438-458 (LLLINYLVVGFLLLGSFIISF).

It belongs to the complex I subunit 2 family. In terms of assembly, NDH-1 is composed of 14 different subunits. Subunits NuoA, H, J, K, L, M, N constitute the membrane sector of the complex.

The protein localises to the cell inner membrane. The enzyme catalyses a quinone + NADH + 5 H(+)(in) = a quinol + NAD(+) + 4 H(+)(out). In terms of biological role, NDH-1 shuttles electrons from NADH, via FMN and iron-sulfur (Fe-S) centers, to quinones in the respiratory chain. The immediate electron acceptor for the enzyme in this species is believed to be ubiquinone. Couples the redox reaction to proton translocation (for every two electrons transferred, four hydrogen ions are translocated across the cytoplasmic membrane), and thus conserves the redox energy in a proton gradient. This Rickettsia felis (strain ATCC VR-1525 / URRWXCal2) (Rickettsia azadi) protein is NADH-quinone oxidoreductase subunit N.